Consider the following 319-residue polypeptide: MENFPIINLEGLNGEGRKATMEKIKDACENWGFFELVSHGIPTEFLDTVERLTKEHYRQCLEQRFKELVASKGLEAVKTEVNDMDWESTFYLRHLPKSNISEVPDLEDQYRNVMKEFALKLEKLAEQLLDLLCENLGLEKGYLKKAFYGTNGPTFGTKVSNYPPCPNPELIKGLRAHTDAGGLILLFQDDKVSGLQLLKDGQWIDVPPMRHSIVINLGDQLEVITNGKYRSVEHRVIAQTDGTRMSIASFYNPGSDAVIYPAPTLVEKEAEEKNQVYPKFVFEDYMKLYAGLKFQPKEPRFEAMKAVETNISLVPIATA.

A Fe2OG dioxygenase domain is found at 153–253; that stretch reads PTFGTKVSNY…RMSIASFYNP (101 aa). Fe cation-binding residues include His-177, Asp-179, and His-234.

The protein belongs to the iron/ascorbate-dependent oxidoreductase family. Requires Fe cation as cofactor.

The catalysed reaction is 1-aminocyclopropane-1-carboxylate + L-ascorbate + O2 = ethene + L-dehydroascorbate + hydrogen cyanide + CO2 + 2 H2O. It functions in the pathway alkene biosynthesis; ethylene biosynthesis via S-adenosyl-L-methionine; ethylene from S-adenosyl-L-methionine: step 2/2. In Prunus mume (Japanese apricot), this protein is 1-aminocyclopropane-1-carboxylate oxidase (ACO1).